Here is a 363-residue protein sequence, read N- to C-terminus: 3-dehydroquinate synthase (363 aa).

Residues 72–77 (SGEQSK), 106–110 (GVIGD), 130–131 (TT), Lys-142, and Lys-151 contribute to the NAD(+) site. Zn(2+) is bound by residues Glu-184, His-246, and His-263.

It belongs to the sugar phosphate cyclases superfamily. Dehydroquinate synthase family. It depends on Co(2+) as a cofactor. Zn(2+) is required as a cofactor. NAD(+) serves as cofactor.

The protein localises to the cytoplasm. It catalyses the reaction 7-phospho-2-dehydro-3-deoxy-D-arabino-heptonate = 3-dehydroquinate + phosphate. Its pathway is metabolic intermediate biosynthesis; chorismate biosynthesis; chorismate from D-erythrose 4-phosphate and phosphoenolpyruvate: step 2/7. In terms of biological role, catalyzes the conversion of 3-deoxy-D-arabino-heptulosonate 7-phosphate (DAHP) to dehydroquinate (DHQ). This is 3-dehydroquinate synthase from Bacillus pumilus (strain SAFR-032).